The chain runs to 265 residues: U6 snRNA phosphodiesterase 1 (265 aa).

A disordered region spans residues 1-72 (MSAAPLVGYS…DSTKHGGRVR (72 aa)). The segment covering 20–31 (DGMRTRPGDGSH) has biased composition (basic and acidic residues). His-120 (proton acceptor) is an active-site residue. 120–122 (HLS) is a binding site for AMP. UMP-binding positions include Gln-164, Tyr-202, and 206 to 210 (SFHLS). Residues Tyr-202 and 204 to 210 (DPSFHLS) contribute to the AMP site. His-208 (proton donor) is an active-site residue.

Belongs to the 2H phosphoesterase superfamily. USB1 family. As to quaternary structure, interacts with PLRG1, CDC5L and PRPF19.

It localises to the nucleus. The catalysed reaction is a 3'-end uridylyl-uridine-RNA = a 3'-end 2',3'-cyclophospho-uridine-RNA + uridine. The enzyme catalyses a 3'-end uridylyl-adenosine-RNA = a 3'-end 2',3'-cyclophospho-uridine-RNA + adenosine. 3'-5' RNA exonuclease activity is inhibited by a 3' phosphate terminated RNA. In terms of biological role, 3'-5' RNA exonuclease that trims the 3' end of oligo(U) and oligo(A) tracts of the pre-U6 small nuclear RNA (snRNA) molecule, leading to the formation of a mature U6 snRNA 3' end-terminated with a 2',3'-cyclic phosphate. Participates in the U6 snRNA 3' end processing that prevents U6 snRNA degradation. In addition also removes uridines from the 3' end of U6atac snRNA and possibly the vault RNA VTRNA1-1. In Homo sapiens (Human), this protein is U6 snRNA phosphodiesterase 1.